The following is a 304-amino-acid chain: UDP-N-acetylenolpyruvoylglucosamine reductase (304 aa).

One can recognise an FAD-binding PCMH-type domain in the interval 32–198 (RVGGPADILV…LSAELELQEG (167 aa)). The active site involves arginine 177. Serine 227 serves as the catalytic Proton donor. Residue glutamate 297 is part of the active site.

The protein belongs to the MurB family. The cofactor is FAD.

The protein resides in the cytoplasm. The enzyme catalyses UDP-N-acetyl-alpha-D-muramate + NADP(+) = UDP-N-acetyl-3-O-(1-carboxyvinyl)-alpha-D-glucosamine + NADPH + H(+). Its pathway is cell wall biogenesis; peptidoglycan biosynthesis. Its function is as follows. Cell wall formation. In Clostridioides difficile (strain 630) (Peptoclostridium difficile), this protein is UDP-N-acetylenolpyruvoylglucosamine reductase.